We begin with the raw amino-acid sequence, 1462 residues long: FYVE, RhoGEF and PH domain-containing protein 5 (1462 aa).

Disordered regions lie at residues 37 to 323 (GRLP…SAEE), 492 to 512 (YVPETVPEETGPEAGSSAPGI), 592 to 613 (SGSFSQRNHLPSSGTSTPSSMV), 670 to 718 (HVDV…ASES), 746 to 777 (EDRSRPPFLPLPLTKPRSISFPSADTSDYENI), and 851 to 887 (CPISSAAPKEDLTSDEEQRSSEEEDSASRDPSVTHKV). Over residues 72–82 (PLREDEPKDEG) the composition is skewed to basic and acidic residues. 2 stretches are compositionally biased toward acidic residues: residues 95 to 106 (SAEEEEEREEGG) and 137 to 151 (EGTDLALEDEGEGCA). Residues 161–177 (SRSEEEEKLVQPHRECS) show a composition bias toward basic and acidic residues. 2 stretches are compositionally biased toward acidic residues: residues 211 to 220 (GEAEEDDEEG) and 242 to 255 (MGQDAEDTSEEPPE). Polar residues predominate over residues 592-611 (SGSFSQRNHLPSSGTSTPSS). Residues 676 to 685 (SSSRSSSESS) show a composition bias toward low complexity. Basic and acidic residues predominate over residues 858-887 (PKEDLTSDEEQRSSEEEDSASRDPSVTHKV). The region spanning 892-1084 (RALVIAQELL…SKVTDRANDS (193 aa)) is the DH domain. Residues 1113–1207 (EFLKEGTLMK…WYGCLSRALP (95 aa)) enclose the PH 1 domain. The segment at 1242-1301 (VTHVMMCMNCGCDFSLTLRRHHCHACGKIVCRNCSRNKYPLKYLKDRMAKVCDGCFGELK) adopts an FYVE-type zinc-finger fold. Zn(2+) is bound by residues Cys1248, Cys1251, Cys1264, Cys1267, Cys1272, Cys1275, Cys1293, and Cys1296. The 99-residue stretch at 1363–1461 (GSAISGYLSR…WIEAMEDASV (99 aa)) folds into the PH 2 domain.

As to expression, expressed in endothelial cells (at protein level).

The protein resides in the cytoplasm. Its subcellular location is the cytoskeleton. It is found in the cell projection. It localises to the ruffle membrane. The protein localises to the endoplasmic reticulum. The protein resides in the golgi apparatus. Its subcellular location is the early endosome. Activates CDC42, a member of the Ras-like family of Rho- and Rac proteins, by exchanging bound GDP for free GTP. Mediates VEGF-induced CDC42 activation. May regulate proangiogenic action of VEGF in vascular endothelial cells, including network formation, directional movement and proliferation. May play a role in regulating the actin cytoskeleton and cell shape. The chain is FYVE, RhoGEF and PH domain-containing protein 5 (FGD5) from Homo sapiens (Human).